The chain runs to 353 residues: 6-phosphogluconolactonase (353 aa).

Belongs to the cycloisomerase 2 family.

Its subcellular location is the cytoplasm. The enzyme catalyses 6-phospho-D-glucono-1,5-lactone + H2O = 6-phospho-D-gluconate + H(+). The protein operates within carbohydrate degradation; pentose phosphate pathway; D-ribulose 5-phosphate from D-glucose 6-phosphate (oxidative stage): step 2/3. Carboxylic ester hydrolase that may be involved in ulvan degradation. Ulvan is the main polysaccharide component of the Ulvales (green seaweed) cell wall. It is composed of disaccharide building blocks comprising 3-sulfated rhamnose (Rha3S) linked to D-glucuronic acid (GlcA), L-iduronic acid (IduA), or D-xylose (Xyl). Catalyzes the hydrolysis of 6-phosphogluconolactone to 6-phosphogluconate. The protein is 6-phosphogluconolactonase (pgl) of Formosa agariphila (strain DSM 15362 / KCTC 12365 / LMG 23005 / KMM 3901 / M-2Alg 35-1).